The sequence spans 122 residues: MIQQESYLNVADNSGAKKLLCIRVLGGGNRRYGSVGDVIIATVKDATPNMPVKKSDVVRAVIVRTRKAIRRESGMSIRFDDNAAVLINQDGNPKGTRVFGPVARELRDKNFTKIVSLAPEVL.

Belongs to the universal ribosomal protein uL14 family. In terms of assembly, part of the 50S ribosomal subunit. Forms a cluster with proteins L3 and L19. In the 70S ribosome, L14 and L19 interact and together make contacts with the 16S rRNA in bridges B5 and B8.

Binds to 23S rRNA. Forms part of two intersubunit bridges in the 70S ribosome. The chain is Large ribosomal subunit protein uL14 from Cyanothece sp. (strain PCC 7425 / ATCC 29141).